A 183-amino-acid polypeptide reads, in one-letter code: Ribosome rescue factor SmrB (183 aa).

One can recognise a Smr domain in the interval 98–173 (LDLHGLTQKQ…GDAALLVLIE (76 aa)).

This sequence belongs to the SmrB family. In terms of assembly, associates with collided ribosomes, but not with correctly translating polysomes.

Its function is as follows. Acts as a ribosome collision sensor. Detects stalled/collided disomes (pairs of ribosomes where the leading ribosome is stalled and a second ribosome has collided with it) and endonucleolytically cleaves mRNA at the 5' boundary of the stalled ribosome. Stalled/collided disomes form a new interface (primarily via the 30S subunits) that binds SmrB. Cleaved mRNA becomes available for tmRNA ligation, leading to ribosomal subunit dissociation and rescue of stalled ribosomes. This Erwinia tasmaniensis (strain DSM 17950 / CFBP 7177 / CIP 109463 / NCPPB 4357 / Et1/99) protein is Ribosome rescue factor SmrB.